The sequence spans 203 residues: Molybdenum cofactor guanylyltransferase (203 aa).

GTP is bound by residues 12-14, K25, N53, D71, and D101; that span reads LAG. D101 serves as a coordination point for Mg(2+).

Belongs to the MobA family. Monomer. Mg(2+) is required as a cofactor.

Its subcellular location is the cytoplasm. It catalyses the reaction Mo-molybdopterin + GTP + H(+) = Mo-molybdopterin guanine dinucleotide + diphosphate. In terms of biological role, transfers a GMP moiety from GTP to Mo-molybdopterin (Mo-MPT) cofactor (Moco or molybdenum cofactor) to form Mo-molybdopterin guanine dinucleotide (Mo-MGD) cofactor. The chain is Molybdenum cofactor guanylyltransferase from Cupriavidus metallidurans (strain ATCC 43123 / DSM 2839 / NBRC 102507 / CH34) (Ralstonia metallidurans).